Consider the following 155-residue polypeptide: Protein SREK1IP1 (155 aa).

Residues 13–30 form a CCHC-type zinc finger; sequence AGCKKCGYPGHLTFECRN. The interval 44-155 is disordered; that stretch reads VSSTSSEDSD…TPNSSEFSRK (112 aa). Ser52 carries the post-translational modification Phosphoserine. A compositionally biased stretch (basic and acidic residues) spans 66–84; sequence QEKRINEEEEKKKEKSKEK. Residues 85 to 94 are compositionally biased toward basic residues; the sequence is IKLKKKRKRS. Residues Ser96 and Ser97 each carry the phosphoserine modification. Residues 107–142 show a composition bias toward basic residues; sequence QKKQKYQKKEKKKEKKSKSKKGKHHKKEKKKRKKEK. Thr146 carries the phosphothreonine modification. Residues 146-155 are compositionally biased toward polar residues; it reads TPNSSEFSRK.

As to quaternary structure, interacts with SREK1/SFRS12.

Its function is as follows. Possible splicing regulator involved in the control of cellular survival. The polypeptide is Protein SREK1IP1 (SREK1IP1) (Homo sapiens (Human)).